The sequence spans 964 residues: SKI family transcriptional corepressor 1 (964 aa).

6 disordered regions span residues 45-72, 278-365, 414-452, 525-587, 610-766, and 793-842; these read TQLG…SSAL, RTFS…GGSA, AGEP…PGPG, AGGG…RKSS, REAY…GPAA, and YLCT…EDGL. Over residues 283-310 the composition is skewed to gly residues; the sequence is QGGGGGGANSGSGGAGKGGAGGGGGPGC. Residues 345–355 are compositionally biased toward low complexity; the sequence is ALGLAAAANGP. Gly residues-rich tracts occupy residues 356-365 and 417-440; these read AGPGGPGGSA and PKGG…GPGA. Pro residues predominate over residues 571–583; it reads SLAPLAPPPPPPA. Positions 652-661 are enriched in acidic residues; it reads DTADEPEVDV. The span at 798–808 shows a compositional bias: basic and acidic residues; sequence ETHEPDKEDNH. A compositionally biased stretch (polar residues) spans 823–834; that stretch reads DQRSVSQPSPAN. Residues 857-921 adopt a coiled-coil conformation; that stretch reads ENLAREELQK…DTLCNELDQE (65 aa).

The protein belongs to the SKI family. In terms of assembly, interacts with LBX1. Interacts with SMAD1, SMAD2 and SMAD3.

It localises to the nucleus. Inhibits BMP signaling. Acts as a transcriptional corepressor of LBX1. The polypeptide is SKI family transcriptional corepressor 1 (Skor1) (Rattus norvegicus (Rat)).